The sequence spans 295 residues: MSSRKSTASSLLLRQYRELTDPKKAIPSFHIELEDDSNIFTWNIGVMVLNEDSIYHGGFFKAQMRFPEDFPFSPPQFRFTPAIYHPNVYRDGRLCISILHQSGDPMTDEPDAETWSPVQTVESVLISIVSLLEDPNINSPANVDAAVDYRKNPEQYKQRVKMEVERSKQDIPKGFIMPTSESAYISQSKLDEPESNKDMADNFWYDSDLDDDENGSVILQDDDYDDGNNHIPFEDDDVYNYNDNDDDDERIEFEDDDDDDDDSIDNDSVMDRKQPHKAEDESEDVEDVERVSKKI.

The region spanning 7-169 (TASSLLLRQY…VKMEVERSKQ (163 aa)) is the UBC core domain. The Glycyl thioester intermediate role is filled by cysteine 95. Residues 185-295 (ISQSKLDEPE…EDVERVSKKI (111 aa)) form a disordered region. The residue at position 186 (serine 186) is a Phosphoserine. Residues 189–200 (KLDEPESNKDMA) are compositionally biased toward basic and acidic residues. Composition is skewed to acidic residues over residues 207-226 (SDLD…DYDD) and 234-265 (EDDD…DSID). The segment covering 269–279 (VMDRKQPHKAE) has biased composition (basic and acidic residues). A phosphoserine mark is found at serine 282 and serine 292.

This sequence belongs to the ubiquitin-conjugating enzyme family. Interacts with CDC53. Component of the E3 ubiquitin ligase complexes SCF with CDC53, SKP1/CBF3D, HRT1 and some F-box proteins like MET30 and CDC4.

It localises to the cytoplasm. Its subcellular location is the nucleus. The catalysed reaction is S-ubiquitinyl-[E1 ubiquitin-activating enzyme]-L-cysteine + [E2 ubiquitin-conjugating enzyme]-L-cysteine = [E1 ubiquitin-activating enzyme]-L-cysteine + S-ubiquitinyl-[E2 ubiquitin-conjugating enzyme]-L-cysteine.. It functions in the pathway protein modification; protein ubiquitination. Its function is as follows. Catalyzes the covalent attachment of ubiquitin to other proteins. Capable, in vitro, to ubiquitinate histone H2A. Functionally, mediates the initiation of DNA replication (transition of G1 to S phase in cell cycle). Essential component of the E3 ubiquitin ligase complex SCF (SKP1-CUL1-F-box protein), which mediates the ubiquitination and subsequent proteasomal degradation of target proteins. Involved in the regulation of methionine biosynthesis genes and in the degradation of CDC6 together with CDC4 and CDC53. This chain is Ubiquitin-conjugating enzyme E2-34 kDa (CDC34), found in Saccharomyces cerevisiae (strain ATCC 204508 / S288c) (Baker's yeast).